We begin with the raw amino-acid sequence, 373 residues long: Chorismate synthase (373 aa).

NADP(+) is bound by residues Arg-48 and Arg-54. FMN-binding positions include 131-133, 243-244, Gly-288, 303-307, and Arg-329; these read RSS, NA, and KPTSS.

The protein belongs to the chorismate synthase family. As to quaternary structure, homotetramer. Requires FMNH2 as cofactor.

The enzyme catalyses 5-O-(1-carboxyvinyl)-3-phosphoshikimate = chorismate + phosphate. The protein operates within metabolic intermediate biosynthesis; chorismate biosynthesis; chorismate from D-erythrose 4-phosphate and phosphoenolpyruvate: step 7/7. In terms of biological role, catalyzes the anti-1,4-elimination of the C-3 phosphate and the C-6 proR hydrogen from 5-enolpyruvylshikimate-3-phosphate (EPSP) to yield chorismate, which is the branch point compound that serves as the starting substrate for the three terminal pathways of aromatic amino acid biosynthesis. This reaction introduces a second double bond into the aromatic ring system. This chain is Chorismate synthase, found in Beijerinckia indica subsp. indica (strain ATCC 9039 / DSM 1715 / NCIMB 8712).